The primary structure comprises 340 residues: Adenosine deaminase (340 aa).

The Zn(2+) site is built by His15 and His17. Residues His17, Asp19, and Gly172 each coordinate substrate. A Zn(2+)-binding site is contributed by His199. Glu202 (proton donor) is an active-site residue. A Zn(2+)-binding site is contributed by Asp279.

It belongs to the metallo-dependent hydrolases superfamily. Adenosine and AMP deaminases family. Adenosine deaminase subfamily. Zn(2+) is required as a cofactor.

It catalyses the reaction adenosine + H2O + H(+) = inosine + NH4(+). The catalysed reaction is 2'-deoxyadenosine + H2O + H(+) = 2'-deoxyinosine + NH4(+). In terms of biological role, catalyzes the hydrolytic deamination of adenosine and 2-deoxyadenosine. The chain is Adenosine deaminase from Streptococcus agalactiae serotype III (strain NEM316).